A 218-amino-acid polypeptide reads, in one-letter code: UPF0319 protein swp_2242 (218 aa).

Positions 1 to 21 (MRLSQSVLTALLICVNSAAFA) are cleaved as a signal peptide.

It belongs to the UPF0319 family.

In Shewanella piezotolerans (strain WP3 / JCM 13877), this protein is UPF0319 protein swp_2242.